The primary structure comprises 393 residues: MEGFSRDLLCGIGKGDAPPPEKRPGQLREEMEEVELSLGLSLGGRFGLDRKGSKLPRSSSVAAMLTTPVEVPAPPSLSRASSLPVQAEASEVERKQGLDGWGSCREGGGLGVQHAARLPASGNPSSASSVGEGQILQGTLMRTSSLPAVIEASGNDDWKKRKEAQSLKRLEVKKKRIERRNSLACNTSKEAAGQSPKEMNANTDKLVSSDETIVSANESHSSGKHLVKGLPPKYQATITSEDSSSAMRKKPNSAFKGTAITEEQNSSSSVPSSGEAISSVTAPSLPLLSLVPITATLGSREDQSILGRAGARANGMGDVERRMMQEMPGVFTKGLSNGSRVEGFLYKYSKGEVRIVCICHGSFLTPSEFVEHAGAGKVDNPLRHIVVSATPNL.

Disordered regions lie at residues 1–27 (MEGF…PGQL) and 155–200 (NDDW…KEMN). A compositionally biased stretch (basic and acidic residues) spans 156–170 (DDWKKRKEAQSLKRL).

The protein belongs to the Ninja family.

It is found in the nucleus. The polypeptide is Ninja-family protein 1 (Zea mays (Maize)).